The primary structure comprises 278 residues: MTTRIDTRFAELKKQGRSAFVTFLMGGDPDPATSLAIIKALPKAGADIIEIGMPFTDPMADGPAVQAAGRRALNAGMTVTRTLQMIHDFRKGEGSTPVVLMGYYNPIYIYGVEKFLTDAKAAGVDGLIVVDLPPEEDSELCIPAMKAGLNFIRLATPTTDDKRLPAVLANTSGFVYYVSITGITGSAAADSTAVGAAVARIKRHTTLPVCVGFGIRTADAARGIAERSDGAVVGSALVDALSGSLDAEGKATAKTVNAVADLAAALAAGVRSARQAAE.

Active-site proton acceptor residues include glutamate 50 and aspartate 61.

This sequence belongs to the TrpA family. Tetramer of two alpha and two beta chains.

The enzyme catalyses (1S,2R)-1-C-(indol-3-yl)glycerol 3-phosphate + L-serine = D-glyceraldehyde 3-phosphate + L-tryptophan + H2O. Its pathway is amino-acid biosynthesis; L-tryptophan biosynthesis; L-tryptophan from chorismate: step 5/5. Its function is as follows. The alpha subunit is responsible for the aldol cleavage of indoleglycerol phosphate to indole and glyceraldehyde 3-phosphate. The sequence is that of Tryptophan synthase alpha chain from Nitrobacter hamburgensis (strain DSM 10229 / NCIMB 13809 / X14).